Reading from the N-terminus, the 474-residue chain is GTPase Der (474 aa).

EngA-type G domains follow at residues 2 to 166 (LRIA…NVPE) and 212 to 385 (LKIA…ETVS). Residues 8–15 (GRPNVGKS), 55–59 (DTGGV), 118–121 (NKAD), 218–225 (GRPNVGKS), 265–269 (DTAGL), and 330–333 (NKWD) each bind GTP. The KH-like domain occupies 386–470 (SKVPTPVVNK…PFDLEFKEKT (85 aa)).

The protein belongs to the TRAFAC class TrmE-Era-EngA-EngB-Septin-like GTPase superfamily. EngA (Der) GTPase family. In terms of assembly, associates with the 50S ribosomal subunit.

GTPase that plays an essential role in the late steps of ribosome biogenesis. The chain is GTPase Der from Chlamydia caviae (strain ATCC VR-813 / DSM 19441 / 03DC25 / GPIC) (Chlamydophila caviae).